A 148-amino-acid chain; its full sequence is UPF0178 protein DP1304 (148 aa).

It belongs to the UPF0178 family.

The polypeptide is UPF0178 protein DP1304 (Desulfotalea psychrophila (strain LSv54 / DSM 12343)).